The following is a 469-amino-acid chain: Phosphatidylinositol 4-kinase type 2-beta (469 aa).

The disordered stretch occupies residues 1–84; it reads MAEACEPTRP…LDRTRTTSSE (84 aa). Ser-37 carries the post-translational modification Phosphoserine. The PI3K/PI4K catalytic domain maps to 108–439; that stretch reads GVFPERISQG…AQMPCVIVEC (332 aa). A G-loop region spans residues 114–120; it reads ISQGSSG. ATP-binding residues include Ser-121 and Lys-136. An important for substrate binding region spans residues 141-143; sequence EPY. An important for interaction with membranes region spans residues 149–162; that stretch reads KWTKYVHKVCCPCC. Residues 245-248 and 259-260 contribute to the ATP site; these read QLFV and RR. Positions 252–260 are important for interaction with membranes; that stretch reads KEAEYWLRR. Residues 289-297 form a catalytic loop region; the sequence is RNTDRGNDN. Positions 330-350 are activation loop; that stretch reads AIDNGLAFPFKHPDEWRAYPF. Asp-332 is an ATP binding site. Positions 345-354 are important for interaction with membranes; the sequence is WRAYPFHWAW.

The protein belongs to the PI3/PI4-kinase family. Type II PI4K subfamily.

Its subcellular location is the cytoplasm. It is found in the cytosol. The protein resides in the golgi apparatus membrane. The protein localises to the endoplasmic reticulum membrane. It localises to the cell membrane. Its subcellular location is the early endosome membrane. The catalysed reaction is a 1,2-diacyl-sn-glycero-3-phospho-(1D-myo-inositol) + ATP = a 1,2-diacyl-sn-glycero-3-phospho-(1D-myo-inositol 4-phosphate) + ADP + H(+). Functionally, together with PI4K2A and the type III PI4Ks (PIK4CA and PIK4CB) it contributes to the overall PI4-kinase activity of the cell. This contribution may be especially significant in plasma membrane, endosomal and Golgi compartments. The phosphorylation of phosphatidylinositol (PI) to PI4P is the first committed step in the generation of phosphatidylinositol 4,5-bisphosphate (PIP2), a precursor of the second messenger inositol 1,4,5-trisphosphate (InsP3). Contributes to the production of InsP3 in stimulated cells and is likely to be involved in the regulation of vesicular trafficking. In Mus musculus (Mouse), this protein is Phosphatidylinositol 4-kinase type 2-beta (Pi4k2b).